The following is a 525-amino-acid chain: GMP synthase [glutamine-hydrolyzing] (525 aa).

Positions 13 to 202 constitute a Glutamine amidotransferase type-1 domain; it reads TILVLDFGSQ…AVDLCHAKQN (190 aa). Cys-89 functions as the Nucleophile in the catalytic mechanism. Residues His-176 and Glu-178 contribute to the active site. The 198-residue stretch at 203-400 folds into the GMPS ATP-PPase domain; it reads WTMKNFIGTE…LGISHELVWR (198 aa). 231–237 contributes to the ATP binding site; that stretch reads SGGVDST. XMP-binding residues include Arg-304, Asp-462, Lys-517, and Glu-523.

Homodimer. It depends on Mg(2+) as a cofactor.

The protein resides in the cytoplasm. It localises to the cytosol. The catalysed reaction is XMP + L-glutamine + ATP + H2O = GMP + L-glutamate + AMP + diphosphate + 2 H(+). It functions in the pathway purine metabolism; GMP biosynthesis; GMP from XMP (L-Gln route): step 1/1. Catalyzes the conversion of xanthine monophosphate (XMP) to GMP in the presence of glutamine and ATP through an adenyl-XMP intermediate. In Candida glabrata (strain ATCC 2001 / BCRC 20586 / JCM 3761 / NBRC 0622 / NRRL Y-65 / CBS 138) (Yeast), this protein is GMP synthase [glutamine-hydrolyzing] (GUA1).